A 135-amino-acid polypeptide reads, in one-letter code: uncharacterized protein (135 aa).

2 helical membrane-spanning segments follow: residues 20–40 (IFSFVFDIFLFIFDVIWNTKL) and 47–67 (IAYFLVFFMVIKLSIYAIHGT).

It belongs to the plectrovirus ORF5 family.

Its subcellular location is the host membrane. This is an uncharacterized protein from Spiroplasma virus SpV1-C74 (SpV1).